The chain runs to 51 residues: Large ribosomal subunit protein bL33 (51 aa).

This sequence belongs to the bacterial ribosomal protein bL33 family.

The sequence is that of Large ribosomal subunit protein bL33 from Francisella tularensis subsp. tularensis (strain FSC 198).